Consider the following 941-residue polypeptide: Protein UL87 (941 aa).

An N-linked (GlcNAc...) asparagine; by host glycan is attached at N37. The tract at residues Q482–D508 is disordered. Acidic residues predominate over residues G488–E500. N591, N661, and N801 each carry an N-linked (GlcNAc...) asparagine; by host glycan. The segment covering V910 to S929 has biased composition (low complexity). The interval V910–R941 is disordered.

This sequence belongs to the herpesviridae UL87 family.

Its subcellular location is the host nucleus. Its function is as follows. Functions concordantly with UL87 to initiate transcription from over half of all active viral promoters in late infection, without affecting host transcription. Acts on and binds to viral early-late and late kinetic-class promoters. The protein is Protein UL87 (UL87) of Homo sapiens (Human).